A 214-amino-acid chain; its full sequence is Cytochrome b (214 aa).

4 helical membrane passes run 31-51 (FGSM…FLAI), 75-96 (WTMQ…YIHI), 111-131 (WLSG…GYVL), and 176-196 (FFAL…AHIM). Heme b contacts are provided by H81 and H95. Heme b contacts are provided by H180 and H194. H199 is a binding site for a ubiquinone.

Belongs to the cytochrome b family. In terms of assembly, the cytochrome bc1 complex contains 3 respiratory subunits (MT-CYB, CYC1 and UQCRFS1), 2 core proteins (UQCRC1 and UQCRC2) and probably 6 low-molecular weight proteins. Requires heme b as cofactor.

It localises to the mitochondrion inner membrane. Functionally, component of the ubiquinol-cytochrome c reductase complex (complex III or cytochrome b-c1 complex) that is part of the mitochondrial respiratory chain. The b-c1 complex mediates electron transfer from ubiquinol to cytochrome c. Contributes to the generation of a proton gradient across the mitochondrial membrane that is then used for ATP synthesis. The polypeptide is Cytochrome b (MT-CYB) (Elapsoidea semiannulata (Angolan garter snake)).